The sequence spans 275 residues: Large ribosomal subunit protein uL2 (275 aa).

2 disordered regions span residues 38-59 and 222-275; these read KKHAGRNNHGHITTRHRGGGHK and GSAM…RKQK. 2 stretches are compositionally biased toward basic residues: residues 39–59 and 254–275; these read KHAGRNNHGHITTRHRGGGHK and MGKKTRHNPRTQRFIVRTRKQK.

The protein belongs to the universal ribosomal protein uL2 family. As to quaternary structure, part of the 50S ribosomal subunit. Forms a bridge to the 30S subunit in the 70S ribosome.

One of the primary rRNA binding proteins. Required for association of the 30S and 50S subunits to form the 70S ribosome, for tRNA binding and peptide bond formation. It has been suggested to have peptidyltransferase activity; this is somewhat controversial. Makes several contacts with the 16S rRNA in the 70S ribosome. The polypeptide is Large ribosomal subunit protein uL2 (Herpetosiphon aurantiacus (strain ATCC 23779 / DSM 785 / 114-95)).